We begin with the raw amino-acid sequence, 204 residues long: Recombination protein RecR (204 aa).

The segment at 63–78 (CNRCFNITVEDPCTIC) adopts a C4-type zinc-finger fold. The region spanning 86-181 (RQVCVVEEPL…RVTRLARGLP (96 aa)) is the Toprim domain.

The protein belongs to the RecR family.

May play a role in DNA repair. It seems to be involved in an RecBC-independent recombinational process of DNA repair. It may act with RecF and RecO. This Herpetosiphon aurantiacus (strain ATCC 23779 / DSM 785 / 114-95) protein is Recombination protein RecR.